Consider the following 261-residue polypeptide: Undecaprenyl-diphosphatase (261 aa).

Helical transmembrane passes span 38–58 (RSDF…TFVF), 75–95 (RDYV…GLAV), 106–126 (IQPI…AESV), 136–156 (VTWS…VFPG), 181–201 (FSFL…CFEL), 217–237 (VAFV…LGYI), and 241–261 (SFAP…TWLT).

It belongs to the UppP family.

The protein resides in the cell inner membrane. It catalyses the reaction di-trans,octa-cis-undecaprenyl diphosphate + H2O = di-trans,octa-cis-undecaprenyl phosphate + phosphate + H(+). Functionally, catalyzes the dephosphorylation of undecaprenyl diphosphate (UPP). Confers resistance to bacitracin. The polypeptide is Undecaprenyl-diphosphatase (Xylella fastidiosa (strain Temecula1 / ATCC 700964)).